The chain runs to 264 residues: MGQTALARGSSSTPTSQALYSDFSPPEGLEELLSAPPPDLVAQRHHGWNPKDCSENIDVKEGGLCFERRPVAQSTDGVRGKRGYSRGLHAWEISWPLEQRGTHAVVGVATALAPLQADHYAALLGSNSESWGWDIGRGKLYHQSKGLEAPQYPAGPQGEQLVVPERLLVVLDMEEGTLGYSIGGTYLGPAFRGLKGRTLYPSVSAVWGQCQVRIRYMGERRVEEPQSLLHLSRLCVRHALGDTRLGQISTLPLPPAMKRYLLYK.

The span at 1–19 (MGQTALARGSSSTPTSQAL) shows a compositional bias: polar residues. Positions 1 to 34 (MGQTALARGSSSTPTSQALYSDFSPPEGLEELLS) are disordered. The 196-residue stretch at 26–221 (PEGLEELLSA…VRIRYMGERR (196 aa)) folds into the B30.2/SPRY domain. The region spanning 222–264 (VEEPQSLLHLSRLCVRHALGDTRLGQISTLPLPPAMKRYLLYK) is the SOCS box domain.

Belongs to the SPSB family. In terms of assembly, component of the probable ECS(SPSB2) E3 ubiquitin-protein ligase complex which contains CUL5, RNF7/RBX2, Elongin BC complex and SPSB2. Interacts with CUL5, RNF7, ELOB and ELOC. Interacts with MET. Interacts (via B30.2/SPRY domain) with PAWR; this interaction occurs in association with the Elongin BC complex. Interacts with NOS2.

It is found in the cytoplasm. The protein localises to the cytosol. It participates in protein modification; protein ubiquitination. In terms of biological role, substrate recognition component of a SCF-like ECS (Elongin BC-CUL2/5-SOCS-box protein) E3 ubiquitin-protein ligase complex which mediates the ubiquitination and subsequent proteasomal degradation of target proteins. Negatively regulates nitric oxide (NO) production and limits cellular toxicity in activated macrophages by mediating the ubiquitination and proteasomal degradation of NOS2. Acts as a bridge which links NOS2 with the ECS E3 ubiquitin ligase complex components ELOC and CUL5. The chain is SPRY domain-containing SOCS box protein 2 (Spsb2) from Mus musculus (Mouse).